The primary structure comprises 548 residues: Glucose-6-phosphate isomerase (548 aa).

The active-site Proton donor is glutamate 355. Residues histidine 386 and lysine 514 contribute to the active site.

This sequence belongs to the GPI family.

Its subcellular location is the cytoplasm. The catalysed reaction is alpha-D-glucose 6-phosphate = beta-D-fructose 6-phosphate. Its pathway is carbohydrate biosynthesis; gluconeogenesis. It participates in carbohydrate degradation; glycolysis; D-glyceraldehyde 3-phosphate and glycerone phosphate from D-glucose: step 2/4. Catalyzes the reversible isomerization of glucose-6-phosphate to fructose-6-phosphate. This is Glucose-6-phosphate isomerase from Hamiltonella defensa subsp. Acyrthosiphon pisum (strain 5AT).